We begin with the raw amino-acid sequence, 31 residues long: Cytochrome b6-f complex subunit 6 (31 aa).

A helical transmembrane segment spans residues isoleucine 4–asparagine 26.

Belongs to the PetL family. In terms of assembly, the 4 large subunits of the cytochrome b6-f complex are cytochrome b6, subunit IV (17 kDa polypeptide, PetD), cytochrome f and the Rieske protein, while the 4 small subunits are PetG, PetL, PetM and PetN. The complex functions as a dimer.

It is found in the plastid. Its subcellular location is the chloroplast thylakoid membrane. Functionally, component of the cytochrome b6-f complex, which mediates electron transfer between photosystem II (PSII) and photosystem I (PSI), cyclic electron flow around PSI, and state transitions. PetL is important for photoautotrophic growth as well as for electron transfer efficiency and stability of the cytochrome b6-f complex. This is Cytochrome b6-f complex subunit 6 from Amborella trichopoda.